The sequence spans 416 residues: 3-isopropylmalate dehydratase large subunit 2 (416 aa).

The [4Fe-4S] cluster site is built by Cys-296, Cys-356, and Cys-359.

This sequence belongs to the aconitase/IPM isomerase family. LeuC type 2 subfamily. As to quaternary structure, heterodimer of LeuC and LeuD. Requires [4Fe-4S] cluster as cofactor.

It carries out the reaction (2R,3S)-3-isopropylmalate = (2S)-2-isopropylmalate. It participates in amino-acid biosynthesis; L-leucine biosynthesis; L-leucine from 3-methyl-2-oxobutanoate: step 2/4. In terms of biological role, catalyzes the isomerization between 2-isopropylmalate and 3-isopropylmalate, via the formation of 2-isopropylmaleate. The protein is 3-isopropylmalate dehydratase large subunit 2 of Archaeoglobus fulgidus (strain ATCC 49558 / DSM 4304 / JCM 9628 / NBRC 100126 / VC-16).